The sequence spans 196 residues: Probable malonic semialdehyde reductase RutE (196 aa).

The protein belongs to the nitroreductase family. HadB/RutE subfamily. FMN is required as a cofactor.

The catalysed reaction is 3-hydroxypropanoate + NADP(+) = 3-oxopropanoate + NADPH + H(+). Its function is as follows. May reduce toxic product malonic semialdehyde to 3-hydroxypropionic acid, which is excreted. The protein is Probable malonic semialdehyde reductase RutE of Escherichia coli O157:H7.